We begin with the raw amino-acid sequence, 321 residues long: Eukaryotic translation initiation factor 3 subunit I (321 aa).

WD repeat units lie at residues 8–47 (GHER…RLGT), 50–89 (GHGG…TLSK), 140–179 (VDNS…KLIS), 182–221 (EHSK…HLKT), and 279–318 (GHFG…DDIE).

It belongs to the eIF-3 subunit I family. As to quaternary structure, component of the eukaryotic translation initiation factor 3 (eIF-3) complex.

The protein resides in the cytoplasm. Functionally, component of the eukaryotic translation initiation factor 3 (eIF-3) complex, which is involved in protein synthesis of a specialized repertoire of mRNAs and, together with other initiation factors, stimulates binding of mRNA and methionyl-tRNAi to the 40S ribosome. The eIF-3 complex specifically targets and initiates translation of a subset of mRNAs involved in cell proliferation. The sequence is that of Eukaryotic translation initiation factor 3 subunit I from Nematostella vectensis (Starlet sea anemone).